A 773-amino-acid chain; its full sequence is MMNDSFCRIIAGEIQARPEQVDAAVRLLDEGNTVPFIARYRKEITGGLDDTQLRNLETRLSYLRELEERRQAILKSISEQGKLTDDLAKAINATLSKTELEDLYLPYKPKRRTRGQIAIEAGLEPLADLLWSDPSHTPEVAAAQYVYADKGVADTKAALDGARYILMERFAEDAALLAKVRDYLWKNAHLVSTVVSGKEEEGAKFRDYFDHHEPLSTVPSHRALAMFRGRNEGVLQLSLNADPQFDEPPKESYCEQIIMDHLGLRLNNAPADSWRKGVVSWTWRIKVLMHLETELMGTVRERAEDEAINVFARNLHDLLMAAPAGLRATMGLDPGLRTGVKVAVVDATGKLVATDTIYPHTGQAAKAAMTVAALCEKHNVELVAIGNGTASRETERFYLDVQKQFPKVTAQKVIVSEAGASVYSASELAAQEFPDLDVSLRGAVSIARRLQDPLAELVKIDPKSIGVGQYQHDVSQTQLARKLDAVVEDCVNAVGVDLNTASVPLLTRVAGLTRMMAQNIVAWRDENGQFQNRQQLLKVSRLGPKAFEQCAGFLRINHGDNPLDASTVHPEAYPVVERILAATQQALKDLMGNSSELRNLKASDFTDEKFGVPTVTDIIKELEKPGRDPRPEFKTAQFADGVETMNDLQPGMILEGAVTNVTNFGAFVDIGVHQDGLVHISSLSNKFVEDPHTVVKAGDIVKVKVLEVDLQRKRIALTMRLDEQPGETNARRGGGNERPQNNRPAAKPRGREAQPAGNSAMMDALAAAMGKKR.

Residues 651–720 (GMILEGAVTN…QRKRIALTMR (70 aa)) enclose the S1 motif domain. Residues 721 to 773 (LDEQPGETNARRGGGNERPQNNRPAAKPRGREAQPAGNSAMMDALAAAMGKKR) are disordered.

The protein is Protein YhgF (yhgF) of Escherichia coli (strain K12).